Here is a 568-residue protein sequence, read N- to C-terminus: Protein downstream neighbor of son homolog (568 aa).

Disordered regions lie at residues 28-48 (NKLA…QVDE) and 311-355 (MPLK…DDDE). Positions 315-335 (SDNSGNAHDNSFNEESTTTSL) are enriched in polar residues.

Belongs to the DONSON family. In terms of tissue distribution, expression peaks during late G1 and S phase (at protein level).

Its subcellular location is the nucleus. Essential for DNA amplification in the ovary and required for cell proliferation during development. The chain is Protein downstream neighbor of son homolog (hd) from Drosophila melanogaster (Fruit fly).